We begin with the raw amino-acid sequence, 194 residues long: Small ribosomal subunit protein uS5 (194 aa).

Residues 26–89 (LEEKVVEIRR…ADAKKHLIRV (64 aa)) form the S5 DRBM domain.

It belongs to the universal ribosomal protein uS5 family. Part of the 30S ribosomal subunit. Contacts proteins S4 and S8.

Functionally, with S4 and S12 plays an important role in translational accuracy. In terms of biological role, located at the back of the 30S subunit body where it stabilizes the conformation of the head with respect to the body. This chain is Small ribosomal subunit protein uS5, found in Persephonella marina (strain DSM 14350 / EX-H1).